Here is a 194-residue protein sequence, read N- to C-terminus: Putative adenylate kinase (194 aa).

ATP contacts are provided by Gly16, Gly18, Lys19, Thr20, and Thr21. The interval 36 to 59 (SVGELLAGTPYVTYIPELDTYEIV) is NMP. Residues 108–118 (RRGWPLKKILD) are LID. Arg109 provides a ligand contact to ATP.

It belongs to the adenylate kinase family. AK6 subfamily. In terms of assembly, interacts with uS11. Not a structural component of 40S pre-ribosomes, but transiently interacts with them by binding to uS11.

The enzyme catalyses AMP + ATP = 2 ADP. The catalysed reaction is ATP + H2O = ADP + phosphate + H(+). Broad-specificity nucleoside monophosphate (NMP) kinase that catalyzes the reversible transfer of the terminal phosphate group between nucleoside triphosphates and monophosphates. Also has ATPase activity. Involved in the late maturation steps of the 30S ribosomal particles, specifically 16S rRNA maturation. While NMP activity is not required for ribosome maturation, ATPase activity is. Associates transiently with small ribosomal subunit protein uS11. ATP hydrolysis breaks the interaction with uS11. May temporarily remove uS11 from the ribosome to enable a conformational change of the ribosomal RNA that is needed for the final maturation step of the small ribosomal subunit. The chain is Putative adenylate kinase from Pyrobaculum aerophilum (strain ATCC 51768 / DSM 7523 / JCM 9630 / CIP 104966 / NBRC 100827 / IM2).